The following is a 105-amino-acid chain: N(4)-acetylcytidine amidohydrolase (105 aa).

The ASCH domain maps to 8–93 (TFFEFLTPLV…ALIQEIYPNI (86 aa)). The Proton acceptor role is filled by Lys22. Thr25 acts as the Nucleophile in catalysis. Residue Glu75 is the Proton donor of the active site.

This sequence belongs to the N(4)-acetylcytidine amidohydrolase family.

It catalyses the reaction N(4)-acetylcytidine + H2O = cytidine + acetate + H(+). The catalysed reaction is N(4)-acetyl-2'-deoxycytidine + H2O = 2'-deoxycytidine + acetate + H(+). The enzyme catalyses N(4)-acetylcytosine + H2O = cytosine + acetate + H(+). Catalyzes the hydrolysis of N(4)-acetylcytidine (ac4C). The protein is N(4)-acetylcytidine amidohydrolase of Vibrio cholerae serotype O1 (strain ATCC 39315 / El Tor Inaba N16961).